Consider the following 494-residue polypeptide: MAYRDLRDFITQLEHLGELKRVQAEVSPYLEMTALCDRTLRAGGPALLFENPTGHNTPVLGNLFGTTRRVALGMGVNDVSELRQFGHVLASLKEPEAPKGFKELMGLGSLVKTLWAMAPKELRSAPCQEIIWEGADVDLARLPIQHCWPGDVAPLITWGLVITQGPHKARQNLGIYRQQVLARNKVIMRWLAQRGGALDFKEHAALNPGQPYPVCVALGADPATILGAVTPVPDSLSEYQFAGLLRGSRTELVKALGSELRVPAFAEIVLEGHIYPDATHASGFEHALEGPFGDHTGYYNEQDWFPVFTIDRITQRRDPIYHSTYTGKPPDEPAMLALALNELFVPLLQRQYPEITDFYLPPEGCSYRLAVVQIKKSYPGHARRVMFGIWSFLRQFMYTKFIVVVDDDVNIRDWKDVIWAITTRVDPTRDTLLADSTPIDYLDFASPVSGLGSKMGLDATNKWPGETSREWGRPLTMSADVTARVEQVWQTLGL.

Asparagine 172 contacts Mn(2+). Prenylated FMN contacts are provided by residues 175–177 (IYR), 189–191 (RWL), and 194–195 (RG). Glutamate 238 provides a ligand contact to Mn(2+). The Proton donor role is filled by aspartate 294.

The protein belongs to the UbiD family. Homohexamer. Prenylated FMN is required as a cofactor. Requires Mn(2+) as cofactor.

It is found in the cell membrane. It carries out the reaction a 4-hydroxy-3-(all-trans-polyprenyl)benzoate + H(+) = a 2-(all-trans-polyprenyl)phenol + CO2. It functions in the pathway cofactor biosynthesis; ubiquinone biosynthesis. Functionally, catalyzes the decarboxylation of 3-octaprenyl-4-hydroxy benzoate to 2-octaprenylphenol, an intermediate step in ubiquinone biosynthesis. The chain is 3-octaprenyl-4-hydroxybenzoate carboxy-lyase from Albidiferax ferrireducens (strain ATCC BAA-621 / DSM 15236 / T118) (Rhodoferax ferrireducens).